The chain runs to 165 residues: Ecotin-like protein 4 (165 aa).

Belongs to the protease inhibitor I11 (ecotin) family.

This Trypanosoma brucei brucei (strain 927/4 GUTat10.1) protein is Ecotin-like protein 4.